A 642-amino-acid chain; its full sequence is Poly(A) RNA polymerase protein 1 (642 aa).

Disordered regions lie at residues 1–29 (MTRLKAKYSPTKGKRKEDKHTKRMRKSSF) and 84–104 (TSSEDEQRAESSKRNNSLEDN). Residues 88–100 (DEQRAESSKRNNS) are compositionally biased toward basic and acidic residues. Mg(2+) is bound by residues D233 and D235. 4 residues coordinate ATP: G298, K323, N428, and R432. The PAP-associated domain occupies 368 to 428 (NLGVLLIDFF…AIQDPGDPNN (61 aa)). A disordered region spans residues 535-642 (AKKKQKAKKD…DYWLSKGQAL (108 aa)). Over residues 578–588 (QGSLLHQNNLS) the composition is skewed to polar residues. Phosphoserine is present on residues S596 and S602. Positions 604-635 (QDQKGRDTPSGQDEKSPLETKTVDAQTRRDYW) are enriched in basic and acidic residues.

This sequence belongs to the DNA polymerase type-B-like family. In terms of assembly, component of the TRAMP5 complex composed of at least AIR1, MTR4 and TFR5. Interacts with POL2, DPB2 and DPB11. Mg(2+) serves as cofactor. Requires Mn(2+) as cofactor.

It is found in the nucleus. The protein localises to the nucleolus. The enzyme catalyses RNA(n) + ATP = RNA(n)-3'-adenine ribonucleotide + diphosphate. In terms of biological role, catalytic subunit of the TRAMP5 complex which has a poly(A) RNA polymerase activity and is involved in a post-transcriptional quality control mechanism limiting inappropriate expression of genetic information. Polyadenylation is required for the degradative activity of the exosome on several of its nuclear RNA substrates like cryptic transcripts generated by RNA polymerase II and III, or hypomethylated pre-tRNAi-Met. Polyadenylates RNA processing and degradation intermediates of snRNAs, snoRNAs and mRNAs that accumulate in strains lacking a functional exosome. TRF5 is also required for proper nuclear division in mitosis and sister chromatid cohesion. Involved in the regulation of histone mRNA levels. May mediate mitotic chromosome condensation. This Saccharomyces cerevisiae (strain ATCC 204508 / S288c) (Baker's yeast) protein is Poly(A) RNA polymerase protein 1 (TRF5).